A 329-amino-acid chain; its full sequence is Microtubule-associated protein RP/EB family member 1C (329 aa).

Residues 13–115 (FVGRSEILAW…FMQWMKKYCD (103 aa)) form the Calponin-homology (CH) domain. Residues 130–141 (REASKGGKEATK) are compositionally biased toward basic and acidic residues. The segment at 130-203 (REASKGGKEA…SAKQSKPVPA (74 aa)) is disordered. Residues 174-185 (SNNTGTHHSSTG) are compositionally biased toward low complexity. The region spanning 193–263 (PSAKQSKPVP…LYAADGEDVG (71 aa)) is the EB1 C-terminal domain. Residues 289–311 (KRKLIVNLDVDVAAITTLSPRQR) form a required for nuclear localization region.

This sequence belongs to the MAPRE family. In terms of assembly, homodimer. Highly expressed in the root and shoot meristems, in guard cells of leaf stomata, pollen grains and pollen tubes.

Its subcellular location is the nucleus. The protein localises to the cytoplasm. It is found in the cytoskeleton. It localises to the spindle. The protein resides in the phragmoplast. Its function is as follows. Plant-specific EB1 subtype that functions preferentially at early stages of plant mitosis by regulating spindle positioning and chromosome segregation. Accumulates in the prophase nucleus and is required to maintain spindle bipolarity during premetaphase and/or metaphase and for efficient segregation of chromosomes at anaphase. May play a role in the dynamics of microtubule network in elongating pollen tubes. The sequence is that of Microtubule-associated protein RP/EB family member 1C (EB1C) from Arabidopsis thaliana (Mouse-ear cress).